We begin with the raw amino-acid sequence, 143 residues long: Large ribosomal subunit protein uL15 (143 aa).

Residues 20-52 (GRGIGSGKGKTAGRGHKGQHSRAGGYHKVGFEG) form a disordered region. Residues 30 to 39 (TAGRGHKGQH) are compositionally biased toward basic residues.

The protein belongs to the universal ribosomal protein uL15 family. In terms of assembly, part of the 50S ribosomal subunit.

In terms of biological role, binds to the 23S rRNA. In Coxiella burnetii (strain CbuG_Q212) (Coxiella burnetii (strain Q212)), this protein is Large ribosomal subunit protein uL15.